The chain runs to 439 residues: Glycosyl hydrolase DigH (439 aa).

The first 27 residues, 1–27 (MDICSRNKKLTIRRPAILVALALLLCS), serve as a signal peptide directing secretion. C28 is lipidated: N-palmitoyl cysteine. C28 is lipidated: S-diacylglycerol cysteine. Positions 34-54 (ESMVTPPAGSKPPATTQQSSQ) are disordered.

It belongs to the glycosyl hydrolase-like 10 (GHL10) family.

The protein resides in the cell outer membrane. In terms of biological role, divisome-localized glycosyl hydrolase that cleaves peptide-free (denuded) peptidoglycans. The sequence is that of Glycosyl hydrolase DigH from Escherichia coli O157:H7.